The following is a 500-amino-acid chain: NAD(P)H-quinone oxidoreductase chain 4, chloroplastic (500 aa).

The next 14 helical transmembrane spans lie at 4 to 24, 37 to 57, 87 to 107, 113 to 130, 134 to 154, 167 to 187, 208 to 228, 242 to 262, 272 to 292, 305 to 325, 330 to 350, 386 to 406, 416 to 436, and 462 to 482; these read FPWL…IGFL, ICIC…HFQL, MGPV…AWPV, LFHF…GSFS, LLLF…LLSL, FILY…GMGL, ALEI…SPII, HYST…YGLV, AHSI…IYAA, IAYS…SITD, GSIL…FLAG, LALP…GIIT, ILIT…SLSM, and LFIL…PDFV.

It belongs to the complex I subunit 4 family.

Its subcellular location is the plastid. The protein resides in the chloroplast thylakoid membrane. It carries out the reaction a plastoquinone + NADH + (n+1) H(+)(in) = a plastoquinol + NAD(+) + n H(+)(out). It catalyses the reaction a plastoquinone + NADPH + (n+1) H(+)(in) = a plastoquinol + NADP(+) + n H(+)(out). The polypeptide is NAD(P)H-quinone oxidoreductase chain 4, chloroplastic (Illicium oligandrum (Star anise)).